We begin with the raw amino-acid sequence, 942 residues long: Leucine--tRNA ligase 2 (942 aa).

Residues 35–45 (PYPNSPFHLGH) carry the 'HIGH' region motif. The short motif at 619–623 (KMSKS) is the 'KMSKS' region element. Residue Lys-622 participates in ATP binding.

The protein belongs to the class-I aminoacyl-tRNA synthetase family.

The protein resides in the cytoplasm. It catalyses the reaction tRNA(Leu) + L-leucine + ATP = L-leucyl-tRNA(Leu) + AMP + diphosphate. The protein is Leucine--tRNA ligase 2 of Sulfolobus acidocaldarius (strain ATCC 33909 / DSM 639 / JCM 8929 / NBRC 15157 / NCIMB 11770).